A 179-amino-acid polypeptide reads, in one-letter code: Large ribosomal subunit protein uL5 (179 aa).

Belongs to the universal ribosomal protein uL5 family. Part of the 50S ribosomal subunit; part of the 5S rRNA/L5/L18/L25 subcomplex. Contacts the 5S rRNA and the P site tRNA. Forms a bridge to the 30S subunit in the 70S ribosome.

In terms of biological role, this is one of the proteins that bind and probably mediate the attachment of the 5S RNA into the large ribosomal subunit, where it forms part of the central protuberance. In the 70S ribosome it contacts protein S13 of the 30S subunit (bridge B1b), connecting the 2 subunits; this bridge is implicated in subunit movement. Contacts the P site tRNA; the 5S rRNA and some of its associated proteins might help stabilize positioning of ribosome-bound tRNAs. In Bdellovibrio bacteriovorus (strain ATCC 15356 / DSM 50701 / NCIMB 9529 / HD100), this protein is Large ribosomal subunit protein uL5.